The sequence spans 559 residues: Formate--tetrahydrofolate ligase (559 aa).

66-73 (TPPGEGKT) contributes to the ATP binding site.

This sequence belongs to the formate--tetrahydrofolate ligase family.

The catalysed reaction is (6S)-5,6,7,8-tetrahydrofolate + formate + ATP = (6R)-10-formyltetrahydrofolate + ADP + phosphate. It participates in one-carbon metabolism; tetrahydrofolate interconversion. The sequence is that of Formate--tetrahydrofolate ligase from Nocardioides sp. (strain ATCC BAA-499 / JS614).